Here is a 387-residue protein sequence, read N- to C-terminus: MDMNSFSPMMPTSPLSMINQIKFEDEPDLKDLFITVDEPESHVTTIETFITYRIITKTSRGEFDSSEFEVRRRYQDFLWLKGKLEEAHPTLIIPPLPEKFIVKGMVERFNDDFIETRRKALHKFLNRIADHPTLTFNEDFKIFLTAQAWELSSHKKQGPGLLSRMGQTVRAVASSMRGVKNRPEEFMEMNNFIELFSQKINLIDKISQRIYKEEREYFDEMKEYGPIHILWSASEEDLVDTLKDVASCIDRCCKATEKRMSGLSEALLPVVHEYVLYSEMLMGVMKRRDQIQAELDSKVEVLTYKKADTDLLPEEIGKLEDKVECANNALKADWERWKQNMQNDIKLAFTDMAEENIHYYEQCLATWESFLTSQTNLHLEEASEDKP.

A PX domain is found at 30–151 (KDLFITVDEP…IFLTAQAWEL (122 aa)). 4 residues coordinate a 1,2-diacyl-sn-glycero-3-phospho-(1D-myo-inositol-3-phosphate): arginine 73, glutamine 75, lysine 103, and arginine 117. Positions 178-387 (GVKNRPEEFM…HLEEASEDKP (210 aa)) constitute a BAR domain.

This sequence belongs to the sorting nexin family. In terms of assembly, heterodimer; heterodimerizes with SNX4.

It is found in the early endosome membrane. Involved in the regulation of endocytosis and in several stages of intracellular trafficking. Together with SNX4, involved in autophagosome assembly by regulating trafficking and recycling of phospholipid scramblase ATG9A. The sequence is that of Sorting nexin-7 from Homo sapiens (Human).